The chain runs to 243 residues: 35 kDa gas vesicle protein (243 aa).

The protein belongs to the gas vesicle GvpC family.

The protein resides in the gas vesicle shell. May confer stability to the gas vesicle shells. Gas vesicles are small, hollow, gas filled protein structures that are found in several microbial planktonic microorganisms. They allow the positioning of the organism at the favorable depth for growth. The polypeptide is 35 kDa gas vesicle protein (Dactylococcopsis salina (strain PCC 8305) (Myxobactron salinum)).